A 513-amino-acid chain; its full sequence is Alanine--glyoxylate aminotransferase 2, mitochondrial (513 aa).

Residues 1–40 (MSLAWRNLQKPFYLETSLRILQMRPSLSLGASRIAVPKLT) constitute a mitochondrion transit peptide. K56 carries the N6-acetyllysine modification. An N6-acetyllysine; alternate modification is found at K70. Position 70 is an N6-succinyllysine; alternate (K70). K83 bears the N6-acetyllysine mark. K261 is modified (N6-acetyllysine; alternate). K261 carries the post-translational modification N6-succinyllysine; alternate. Residue K303 is modified to N6-succinyllysine. K349 carries the N6-(pyridoxal phosphate)lysine modification. K416 and K419 each carry N6-acetyllysine; alternate. 2 positions are modified to N6-succinyllysine; alternate: K416 and K419. K453 is modified (N6-acetyllysine).

It belongs to the class-III pyridoxal-phosphate-dependent aminotransferase family. In terms of assembly, homotetramer. Requires pyridoxal 5'-phosphate as cofactor. As to expression, expressed in the liver and kidney.

The protein resides in the mitochondrion. The catalysed reaction is glyoxylate + L-alanine = glycine + pyruvate. It catalyses the reaction (R)-3-amino-2-methylpropanoate + pyruvate = 2-methyl-3-oxopropanoate + L-alanine. It carries out the reaction 3-oxopropanoate + L-alanine = beta-alanine + pyruvate. The enzyme catalyses 2-oxobutanoate + L-alanine = (2S)-2-aminobutanoate + pyruvate. The catalysed reaction is N(omega),N(omega)-dimethyl-L-arginine + pyruvate = 5-(3,3-dimethylguanidino)-2-oxopentanoate + L-alanine. It catalyses the reaction N(omega),N('omega)-dimethyl-L-arginine + pyruvate = 5-(3,3'-dimethylguanidino)-2-oxopentanoate + L-alanine. It carries out the reaction N(omega),N(omega)-dimethyl-L-arginine + glyoxylate = 5-(3,3-dimethylguanidino)-2-oxopentanoate + glycine. The enzyme catalyses N(omega),N('omega)-dimethyl-L-arginine + glyoxylate = 5-(3,3'-dimethylguanidino)-2-oxopentanoate + glycine. The catalysed reaction is N(omega)-methyl-L-arginine + pyruvate = 5-(3-methylguanidino)-2-oxopentanoate + L-alanine. It catalyses the reaction N(omega)-methyl-L-arginine + glyoxylate = 5-(3-methylguanidino)-2-oxopentanoate + glycine. It carries out the reaction L-ornithine + pyruvate = 5-amino-2-oxopentanoate + L-alanine. The enzyme catalyses L-ornithine + glyoxylate = 5-amino-2-oxopentanoate + glycine. The catalysed reaction is (2S)-2-aminobutanoate + glyoxylate = 2-oxobutanoate + glycine. It catalyses the reaction N(omega),N(omega)-dimethyl-L-arginine + oxaloacetate = 5-(3,3-dimethylguanidino)-2-oxopentanoate + L-aspartate. It carries out the reaction oxaloacetate + L-alanine = L-aspartate + pyruvate. The enzyme catalyses N(omega),N(omega)-dimethyl-L-arginine + 2-oxobutanoate = 5-(3,3-dimethylguanidino)-2-oxopentanoate + (2S)-2-aminobutanoate. The catalysed reaction is 2-oxopentanoate + N(omega),N(omega)-dimethyl-L-arginine = 5-(3,3-dimethylguanidino)-2-oxopentanoate + L-2-aminopentanoate. It catalyses the reaction 2-oxohexanoate + N(omega),N(omega)-dimethyl-L-arginine = L-2-aminohexanoate + 5-(3,3-dimethylguanidino)-2-oxopentanoate. With respect to regulation, (R)-3-amino-2-methylpropionate--pyruvate transaminase and beta-alanine-pyruvate aminotransferase are inhibited by aminooxyacetic acid. Its function is as follows. Multifunctional aminotransferase with a broad substrate specificity. Catalyzes the conversion of glyoxylate to glycine using alanine as the amino donor. Catalyzes metabolism of not L- but the D-isomer of D-beta-aminoisobutyric acid to generate 2-methyl-3-oxopropanoate and alanine. Catalyzes the transfer of the amino group from beta-alanine to pyruvate to yield L-alanine and 3-oxopropanoate. Can metabolize NG-monomethyl-L-arginine (NMMA), asymmetric NG,NG-dimethyl-L-arginine (ADMA) and symmetric NG,N'G-dimethyl-L-arginine (SDMA). ADMA is a potent inhibitor of nitric-oxide (NO) synthase, and this activity provides mechanism through which the kidney regulates blood pressure. This Mus musculus (Mouse) protein is Alanine--glyoxylate aminotransferase 2, mitochondrial (Agxt2).